The following is a 225-amino-acid chain: Sirohydrochlorin ferrochelatase, chloroplastic (225 aa).

Residues 1 to 46 (MTTQSQFLVNLSYGGLASQSNLRANNRVSPSSCQITRTNRSWALPV) constitute a chloroplast transit peptide. Fe cation is bound by residues histidine 89 and histidine 155. [4Fe-4S] cluster contacts are provided by cysteine 199, cysteine 210, cysteine 213, and cysteine 219.

This sequence belongs to the CbiX family. SirB subfamily. Homodimer. [4Fe-4S] cluster is required as a cofactor.

It localises to the plastid. The protein resides in the chloroplast. It catalyses the reaction siroheme + 2 H(+) = sirohydrochlorin + Fe(2+). It participates in porphyrin-containing compound metabolism; siroheme biosynthesis; siroheme from sirohydrochlorin: step 1/1. Chelates iron to the siroheme precursor. Catalyzes the last step of the siroheme biosynthesis. Unlike its counterparts in bacteria, contains an [Fe-S] cluster which is not involved directly in the enzymatic reaction, but may play regulatory role in iron, sulfur and tetrapyrrole metabolism. The [Fe-S] cluster is required for normal plant growth. The protein is Sirohydrochlorin ferrochelatase, chloroplastic of Arabidopsis thaliana (Mouse-ear cress).